A 1227-amino-acid polypeptide reads, in one-letter code: JNK-interacting protein 3 (1227 aa).

The tract at residues 1 to 22 (MMDNDDALLNNGGPQSGAETVY) is disordered. The region spanning 25 to 113 (EDNNMVMSEK…VTQYEREKSA (89 aa)) is the RH1 domain. A coiled-coil region spans residues 84–191 (RINQEQDVEV…TELFKNHVDY (108 aa)). Residues 281 to 323 (DALQQQHHATSPQSPDSSPVVPNVPTNVGRSTTKKEQRSDNNL) form a disordered region. Low complexity predominate over residues 290–308 (TSPQSPDSSPVVPNVPTNV). The stretch at 363-489 (GKEVENLIME…EAVRLTEILR (127 aa)) forms a coiled coil. Positions 453-524 (RKRFTRVEMA…PSNRPTERVA (72 aa)) constitute an RH2 domain. Disordered stretches follow at residues 517-572 (NRPT…HPAS), 804-851 (GKVE…AEEP), and 863-889 (PLPGAPQRLSTDGNQTNNNNNSSSSSN). Gly residues predominate over residues 526–540 (GLGGGPMFRHTGGGS). Positions 541 to 550 (PAHSHGSPSR) are enriched in low complexity. Residues 807–817 (EFVRVKPKSDD) show a composition bias toward basic and acidic residues. A coiled-coil region spans residues 814 to 849 (KSDDEQNSNEKQQQEEEEAKEATEKSNEQLPAVSAE). Residues 879 to 889 (NNNNNSSSSSN) show a composition bias toward low complexity.

This sequence belongs to the JIP scaffold family. In terms of assembly, forms homo- and heterooligomeric complexes. Binds the TPR motif-containing C-terminal of kinesin light chain, Klc. Pre-assembled syd scaffolding complexes are then transported as a cargo of kinesin, to the required subcellular location.

It localises to the cytoplasm. In terms of biological role, the JNK-interacting protein (JIP) group of scaffold proteins selectively mediates JNK-signaling by aggregating specific components of the MAPK cascade to form a functional JNK signaling module. May function as a regulator of vesicle transport, through interactions with the JNK-signaling components and motor proteins. Syd is required for efficient kinesin-I mediated axonal transport. In Drosophila melanogaster (Fruit fly), this protein is JNK-interacting protein 3 (syd).